A 277-amino-acid polypeptide reads, in one-letter code: Large ribosomal subunit protein uL2 (277 aa).

A disordered region spans residues 225–277; that stretch reads MNPIDHPHGGGEGKTAAGRHPVSPWGTPSKGFRTRVNKRTDGMIVRRRYSNKG.

The protein belongs to the universal ribosomal protein uL2 family. As to quaternary structure, part of the 50S ribosomal subunit. Forms a bridge to the 30S subunit in the 70S ribosome.

In terms of biological role, one of the primary rRNA binding proteins. Required for association of the 30S and 50S subunits to form the 70S ribosome, for tRNA binding and peptide bond formation. It has been suggested to have peptidyltransferase activity; this is somewhat controversial. Makes several contacts with the 16S rRNA in the 70S ribosome. The sequence is that of Large ribosomal subunit protein uL2 from Nitrosospira multiformis (strain ATCC 25196 / NCIMB 11849 / C 71).